The chain runs to 455 residues: MSFIPHKLEQIKKMLDTIGASSVDQLFDEIPRHLRADTLNIKDGINEIQLANLMRKRANKNHHNINYIGAGAYSHHIPAAIWDIVARGEFYTAYTPYQAEASQGGLQVIYEFQTMMAGLTGMDASNASMYDGATALAESVLMAIRSNKKAKSQKVLIAEALHPTYLRVLETITKHQGIEFDIVNLDSKNGKTDVTKLEDFANTNYAAVVIQSPNFLGQLADVDGITNWAHKHGALVIAVTNPMSLAILKSPAEWGDNGADIVCGEGQPIGVPLASGGPYFGFMTCKMAHVRQMPGRIVGRTVDLDGNEGFCLTLQAREQHIRRAKATSNICTNQGLMVTAATIYMSLLGAEGLERVASISHENTQTLATELAKINGVSIRFNSAFFNEVVIDLPVNAETFVTEMEKEAIDAGYFLGEYHSDLANSIMVCATEIHTSEDIKEYIEATKKVLARIGG.

The protein belongs to the GcvP family. N-terminal subunit subfamily. In terms of assembly, the glycine cleavage system is composed of four proteins: P, T, L and H. In this organism, the P 'protein' is a heterodimer of two subunits.

It catalyses the reaction N(6)-[(R)-lipoyl]-L-lysyl-[glycine-cleavage complex H protein] + glycine + H(+) = N(6)-[(R)-S(8)-aminomethyldihydrolipoyl]-L-lysyl-[glycine-cleavage complex H protein] + CO2. In terms of biological role, the glycine cleavage system catalyzes the degradation of glycine. The P protein binds the alpha-amino group of glycine through its pyridoxal phosphate cofactor; CO(2) is released and the remaining methylamine moiety is then transferred to the lipoamide cofactor of the H protein. This Francisella tularensis subsp. holarctica (strain LVS) protein is Probable glycine dehydrogenase (decarboxylating) subunit 1.